The following is a 586-amino-acid chain: A-type ATP synthase subunit A (586 aa).

Residue 232–239 (GPFGSGKT) participates in ATP binding.

Belongs to the ATPase alpha/beta chains family. Has multiple subunits with at least A(3), B(3), C, D, E, F, H, I and proteolipid K(x).

The protein localises to the cell membrane. It catalyses the reaction ATP + H2O + 4 H(+)(in) = ADP + phosphate + 5 H(+)(out). Its function is as follows. Component of the A-type ATP synthase that produces ATP from ADP in the presence of a proton gradient across the membrane. The A chain is the catalytic subunit. This chain is A-type ATP synthase subunit A, found in Methanococcus maripaludis (strain C5 / ATCC BAA-1333).